We begin with the raw amino-acid sequence, 515 residues long: 2,3-bisphosphoglycerate-independent phosphoglycerate mutase (515 aa).

Mn(2+) contacts are provided by aspartate 14 and serine 63. Residue serine 63 is part of the active site. Substrate contacts are provided by residues histidine 124, 154-155 (RD), arginine 186, arginine 192, 259-262 (RADR), and lysine 334. Mn(2+) contacts are provided by aspartate 401, histidine 405, aspartate 442, histidine 443, and histidine 460.

It belongs to the BPG-independent phosphoglycerate mutase family. Mg(2+) serves as cofactor. Requires Mn(2+) as cofactor.

It carries out the reaction (2R)-2-phosphoglycerate = (2R)-3-phosphoglycerate. It functions in the pathway carbohydrate degradation; glycolysis; pyruvate from D-glyceraldehyde 3-phosphate: step 3/5. Its activity is regulated as follows. Activity is not affected by 2,3-bisphosphoglycerate. Its function is as follows. Catalyzes the interconversion of 2-phosphoglycerate and 3-phosphoglycerate. The chain is 2,3-bisphosphoglycerate-independent phosphoglycerate mutase from Onchocerca volvulus.